The chain runs to 339 residues: Deubiquitinase and deneddylase Dub2 (339 aa).

A helical transmembrane segment spans residues 36–56 (IIIALFLIVISCGLILCAYTF). Catalysis depends on residues His-203, Asp-220, and Cys-282.

The protein belongs to the peptidase C48 family.

Its subcellular location is the secreted. The protein localises to the host cell. The protein resides in the membrane. Its function is as follows. Effector proteins function to alter host cell physiology and promote bacterial survival in host tissues. This protease possesses deubiquitinating and deneddylating activities. The chain is Deubiquitinase and deneddylase Dub2 (cdu2) from Chlamydia trachomatis serovar D (strain ATCC VR-885 / DSM 19411 / UW-3/Cx).